Here is a 338-residue protein sequence, read N- to C-terminus: Isopenicillin N synthase (338 aa).

Residues Arg89, Tyr93, Ser185, and Tyr191 each coordinate isopenicillin N. The N-[(5S)-5-amino-5-carboxypentanoyl]-L-cysteinyl-D-valine site is built by Arg89, Tyr93, Ser185, Tyr191, His216, and Asp218. A Fe2OG dioxygenase domain is found at 182 to 290 (TLSSVVLIRY…RQSLPFFVNL (109 aa)). Fe(2+) is bound by residues His216, Asp218, and His272. Position 281 (Arg281) interacts with 2-oxoglutarate. Residue Ser283 coordinates isopenicillin N. Residue Ser283 participates in N-[(5S)-5-amino-5-carboxypentanoyl]-L-cysteinyl-D-valine binding.

The protein belongs to the iron/ascorbate-dependent oxidoreductase family. In terms of assembly, monomer. Requires Fe(2+) as cofactor.

The protein localises to the cytoplasm. It is found in the cytosol. The enzyme catalyses N-[(5S)-5-amino-5-carboxypentanoyl]-L-cysteinyl-D-valine + O2 = isopenicillin N + 2 H2O. It functions in the pathway antibiotic biosynthesis; penicillin G biosynthesis; penicillin G from L-alpha-aminoadipate and L-cysteine and L-valine: step 2/3. In terms of biological role, isopenicillin N synthase; part of the gene cluster that mediates the biosynthesis of penicillin, the world's most important antibiotic. IpnA catalyzes the cyclization of the tripeptide N-[(5S)-5-amino-5-carboxypentanoyl]-L-cysteinyl-D-valine (LLD-ACV or ACV) to form isopenicillin N (IPN) that contains the beta-lactam nucleus. The penicillin biosynthesis occurs via 3 enzymatic steps, the first corresponding to the production of the tripeptide N-[(5S)-5-amino-5-carboxypentanoyl]-L-cysteinyl-D-valine (LLD-ACV or ACV) by the NRPS pcbAB. The tripeptide ACV is then cyclized to isopenicillin N (IPN) by the isopenicillin N synthase pcbC that forms the beta-lactam nucleus. Finally, the alpha-aminoadipyl side chain is exchanged for phenylacetic acid by the isopenicillin N acyltransferase penDE to yield penicillin in the peroxisomal matrix. This Hapsidospora chrysogena (Acremonium chrysogenum) protein is Isopenicillin N synthase (PCBC).